Here is a 483-residue protein sequence, read N- to C-terminus: Spore germination protein B1 (483 aa).

The next 5 helical transmembrane spans lie at 289-309, 323-343, 353-373, 375-395, and 410-430; these read ILIT…HTGL, LNVP…IELI, PIGQ…AVQA, IVSA…FTVP, and VMIS…LFVI.

This sequence belongs to the GerABKA family.

It localises to the cell membrane. In terms of biological role, involved in the response to the germinative mixture of L-asparagine, glucose, fructose and potassium ions (AGFK). Cannot stimulate germination in the absence of gerD and gerK gene products (fructose and glucose receptors respectively). The chain is Spore germination protein B1 (gerBA) from Bacillus subtilis (strain 168).